The following is a 269-amino-acid chain: Type II restriction enzyme SfiI (269 aa).

It catalyses the reaction Endonucleolytic cleavage of DNA to give specific double-stranded fragments with terminal 5'-phosphates.. An F and P subtype restriction enzyme that recognizes the double-stranded sequence 5'-GGCCN(5)GGCC-3' and cleaves before N-9. This chain is Type II restriction enzyme SfiI (sfiIR), found in Streptomyces fimbriatus.